An 81-amino-acid polypeptide reads, in one-letter code: Sulfur carrier protein TusA (81 aa).

The Cysteine persulfide intermediate role is filled by Cys19.

Belongs to the sulfur carrier protein TusA family. As to quaternary structure, interacts with IscS.

It is found in the cytoplasm. The protein operates within tRNA modification. Functionally, sulfur carrier protein involved in sulfur trafficking in the cell. Part of a sulfur-relay system required for 2-thiolation during synthesis of 2-thiouridine of the modified wobble base 5-methylaminomethyl-2-thiouridine (mnm(5)s(2)U) in tRNA. Interacts with IscS and stimulates its cysteine desulfurase activity. Accepts an activated sulfur from IscS, which is then transferred to TusD, and thus determines the direction of sulfur flow from IscS to 2-thiouridine formation. Also appears to be involved in sulfur transfer for the biosynthesis of molybdopterin. In Pectobacterium atrosepticum (strain SCRI 1043 / ATCC BAA-672) (Erwinia carotovora subsp. atroseptica), this protein is Sulfur carrier protein TusA.